A 107-amino-acid chain; its full sequence is Nucleoid-associated protein GOX0603 (107 aa).

Belongs to the YbaB/EbfC family. As to quaternary structure, homodimer.

The protein localises to the cytoplasm. It localises to the nucleoid. Functionally, binds to DNA and alters its conformation. May be involved in regulation of gene expression, nucleoid organization and DNA protection. This Gluconobacter oxydans (strain 621H) (Gluconobacter suboxydans) protein is Nucleoid-associated protein GOX0603.